Here is a 547-residue protein sequence, read N- to C-terminus: Kelch repeat and BTB domain-containing protein 2 (547 aa).

A BTB domain is found at 20–89; it reads CDVIITIGDG…LYNRHISSMN (70 aa). 3 Kelch repeats span residues 295-342, 343-389, and 391-454; these read DIII…VIDD, TIYA…VLDQ, and IYII…SHKD.

As to quaternary structure, interacts (via BTB domain) with host CUL3.

The protein resides in the host cytoplasm. Its function is as follows. Probable substrate-specific adapter of CUL3-containing E3 ubiquitin-protein ligases which mediate the ubiquitination and subsequent proteasomal degradation of host target proteins. The polypeptide is Kelch repeat and BTB domain-containing protein 2 (KBTB2) (Bos taurus (Bovine)).